The primary structure comprises 437 residues: Phosphoglucosamine mutase (437 aa).

Catalysis depends on Ser-101, which acts as the Phosphoserine intermediate. 4 residues coordinate Mg(2+): Ser-101, Asp-234, Asp-236, and Asp-238. Ser-101 is subject to Phosphoserine.

It belongs to the phosphohexose mutase family. The cofactor is Mg(2+). Activated by phosphorylation.

It carries out the reaction alpha-D-glucosamine 1-phosphate = D-glucosamine 6-phosphate. Functionally, catalyzes the conversion of glucosamine-6-phosphate to glucosamine-1-phosphate. The protein is Phosphoglucosamine mutase of Thermus thermophilus (strain ATCC 27634 / DSM 579 / HB8).